Here is a 61-residue protein sequence, read N- to C-terminus: Probable tautomerase LL0574 (61 aa).

Pro2 (proton acceptor; via imino nitrogen) is an active-site residue.

The protein belongs to the 4-oxalocrotonate tautomerase family.

The protein is Probable tautomerase LL0574 of Lactococcus lactis subsp. lactis (strain IL1403) (Streptococcus lactis).